Reading from the N-terminus, the 298-residue chain is HTH-type transcriptional regulator ArgP (298 aa).

One can recognise an HTH lysR-type domain in the interval 4 to 60 (VDYRWVAALDAVIAQRGFERAAEKLCITQSAVSQRIKQLEKLMAQPLLVREQPPRPT). A DNA-binding region (H-T-H motif) is located at residues 21-40 (FERAAEKLCITQSAVSQRIK).

The protein belongs to the LysR transcriptional regulatory family. In terms of assembly, homodimer.

Its function is as follows. Controls the transcription of genes involved in arginine and lysine metabolism. The sequence is that of HTH-type transcriptional regulator ArgP from Photobacterium profundum (strain SS9).